Consider the following 469-residue polypeptide: Light-independent protochlorophyllide reductase subunit N (469 aa).

3 residues coordinate [4Fe-4S] cluster: Cys24, Cys49, and Cys109.

Belongs to the BchN/ChlN family. As to quaternary structure, protochlorophyllide reductase is composed of three subunits; ChlL, ChlN and ChlB. Forms a heterotetramer of two ChlB and two ChlN subunits. [4Fe-4S] cluster serves as cofactor.

The enzyme catalyses chlorophyllide a + oxidized 2[4Fe-4S]-[ferredoxin] + 2 ADP + 2 phosphate = protochlorophyllide a + reduced 2[4Fe-4S]-[ferredoxin] + 2 ATP + 2 H2O. It functions in the pathway porphyrin-containing compound metabolism; chlorophyll biosynthesis (light-independent). Functionally, component of the dark-operative protochlorophyllide reductase (DPOR) that uses Mg-ATP and reduced ferredoxin to reduce ring D of protochlorophyllide (Pchlide) to form chlorophyllide a (Chlide). This reaction is light-independent. The NB-protein (ChlN-ChlB) is the catalytic component of the complex. The sequence is that of Light-independent protochlorophyllide reductase subunit N from Synechocystis sp. (strain ATCC 27184 / PCC 6803 / Kazusa).